The sequence spans 107 residues: Large ribosomal subunit protein mL55 (107 aa).

A mitochondrion-targeting transit peptide spans 1-16; that stretch reads MLLKQLPQAVQQIRCI.

The protein belongs to the mitochondrion-specific ribosomal protein mL55 family. In terms of assembly, component of the mitochondrial ribosome large subunit (39S) which comprises a 16S rRNA and about 50 distinct proteins. In terms of tissue distribution, ubiquitously expressed (at protein level).

The protein localises to the mitochondrion. Its function is as follows. Involved in mitochondrial biogenesis and G2/M phase cell cycle progression. The chain is Large ribosomal subunit protein mL55 (mRpL55) from Drosophila melanogaster (Fruit fly).